The chain runs to 347 residues: MASAQVPFSFPLAHFLIFVFVTSTIIHLQQRIVKLQTLSEKELQAVQMSSPNAARTDMQQSAKLQGIFTINSIGRLGNQMGEYATLFALARMNGRLAFIPESMHNALAPIFRISLPVLHSDTARRIPWQNYHLNDWMEERYRHIPGQYVRFTGYPCSWTFYHHLRPEILKEFTLHDHVREEAQAFLRGLRVNGSQPSTFVGVHVRRGDYVHVMPKVWKGVVADRGYLEKALDRFRARYSSPVFVVTSNGMAWCRENINTSLGDVVFAGNGIEGSPAKDFALLTQCNHTIMTIGTFGIWAAYLAGGDTIYLANYTLPDSPFLKIFKPAAAFLPEWMGIPADLSPLLKH.

Topologically, residues 1–5 (MASAQ) are cytoplasmic. The chain crosses the membrane as a helical; Signal-anchor for type II membrane protein span at residues 6–26 (VPFSFPLAHFLIFVFVTSTII). At 27 to 347 (HLQQRIVKLQ…PADLSPLLKH (321 aa)) the chain is on the lumenal side. 4 N-linked (GlcNAc...) asparagine glycosylation sites follow: Asn192, Asn258, Asn286, and Asn312.

This sequence belongs to the glycosyltransferase 11 family. As to expression, expressed in stomach, colon, ovary and uterus, specifically in luminal uterine epithelium. Expressed in various tissues including heart, liver, kidney, testis, epididymis, small intestine,and cecum. Expressed in duodenum, jejunum and ileum.

It localises to the golgi apparatus. The protein localises to the golgi stack membrane. The enzyme catalyses a beta-D-galactosyl-(1-&gt;3)-N-acetyl-beta-D-glucosaminyl derivative + GDP-beta-L-fucose = an alpha-L-Fuc-(1-&gt;2)-beta-D-Gal-(1-&gt;3)-beta-D-GlcNAc derivative + GDP + H(+). The catalysed reaction is a beta-D-galactosyl-(1-&gt;4)-N-acetyl-beta-D-glucosaminyl derivative + GDP-beta-L-fucose = an alpha-L-Fuc-(1-&gt;2)-beta-D-Gal-(1-&gt;4)-beta-D-GlcNAc derivative + GDP + H(+). It catalyses the reaction a neolactoside nLc4Cer + GDP-beta-L-fucose = a neolactoside IV(2)-alpha-Fuc-nLc4Cer + GDP + H(+). It carries out the reaction a neolactoside nLc4Cer(d18:1(4E)) + GDP-beta-L-fucose = a neolactoside IV(2)-alpha-Fuc-nLc4Cer(d18:1(4E)) + GDP + H(+). The enzyme catalyses a ganglioside GM1 + GDP-beta-L-fucose = a ganglioside Fuc-GM1 + GDP + H(+). The catalysed reaction is a ganglioside GA1 + GDP-beta-L-fucose = a ganglioside Fuc-GA1 + GDP + H(+). It catalyses the reaction Lc4Cer + GDP-beta-L-fucose = alpha-L-fucosyl-(1-&gt;2)-beta-D-galactosyl-(1-&gt;3)-N-acetyl-beta-D-glucosaminyl-(1-&gt;3)-beta-D-galactosyl-(1-&gt;4)-beta-D-glucosyl-(1&lt;-&gt;1')-ceramide + GDP + H(+). It carries out the reaction a beta-D-Gal-(1-&gt;3)-beta-D-GlcNAc-(1-&gt;3)-beta-D-Gal-(1-&gt;4)-beta-D-Glc-(1&lt;-&gt;1')-Cer(d18:1(4E)) + GDP-beta-L-fucose = alpha-L-fucosyl-(1-&gt;2)- beta-D-galactosyl-(1-&gt;3)-N-acetyl-beta-D-glucosaminyl-(1-&gt;3)-beta-D-galactosyl-(1-&gt;4)-beta-D-glucosyl-(1&lt;-&gt;1')-N-acylsphing-4-enine + GDP + H(+). The enzyme catalyses a ganglioside GD1b + GDP-beta-L-fucose = a ganglioside Fuc-GD1b + GDP + H(+). The catalysed reaction is a ganglioside GM1 (d18:1(4E)) + GDP-beta-L-fucose = a ganglioside Fuc-GM1 (d18:1(4E)) + GDP + H(+). It catalyses the reaction a globoside GalGb4Cer (d18:1(4E)) + GDP-beta-L-fucose = a globoside Globo-H (d18:1(4E)) + GDP + H(+). It carries out the reaction a lactoside III(4)-a-Fuc-Lc4Cer + GDP-beta-L-fucose = a lactoside IV(2),III(4)-a-[Fuc]2-Lc4Cer + GDP + H(+). The enzyme catalyses beta-D-galactosyl-(1-&gt;3)-N-acetyl-D-galactosamine + GDP-beta-L-fucose = alpha-L-fucosyl-(1-&gt;2)-beta-D-galactosyl-(1-&gt;3)-N-acetyl-D-galactosamine + GDP + H(+). It participates in protein modification; protein glycosylation. In terms of biological role, catalyzes the transfer of L-fucose, from a guanosine diphosphate-beta-L-fucose, to the terminal galactose on both O- and N-linked glycans chains of cell surface glycoproteins and glycolipids and the resulting epitope regulates several processes such as cell-cell interaction including host-microbe interaction, cell surface expression and cell proliferation. Preferentially fucosylates gangliosides GA1 and GM1 in the antrum, cecum and colon and in the female reproductive organs. Fucosylated host glycoproteins or glycolipids mediate interaction with intestinal microbiota influencing its composition. Creates a soluble precursor oligosaccharide FuC-alpha ((1,2)Galbeta-) called the H antigen which is an essential substrate for the final step in the soluble ABO blood group antigen synthesis pathway. The protein is Galactoside alpha-(1,2)-fucosyltransferase 2 of Mus musculus (Mouse).